Reading from the N-terminus, the 396-residue chain is Ribosomal RNA large subunit methyltransferase I (396 aa).

The PUA domain maps to S2 to R81.

The protein belongs to the methyltransferase superfamily. RlmI family.

Its subcellular location is the cytoplasm. The catalysed reaction is cytidine(1962) in 23S rRNA + S-adenosyl-L-methionine = 5-methylcytidine(1962) in 23S rRNA + S-adenosyl-L-homocysteine + H(+). Its function is as follows. Specifically methylates the cytosine at position 1962 (m5C1962) of 23S rRNA. The chain is Ribosomal RNA large subunit methyltransferase I from Escherichia coli O1:K1 / APEC.